The sequence spans 120 residues: Large ribosomal subunit protein uL18 (120 aa).

It belongs to the universal ribosomal protein uL18 family. In terms of assembly, part of the 50S ribosomal subunit; part of the 5S rRNA/L5/L18/L25 subcomplex. Contacts the 5S and 23S rRNAs.

Functionally, this is one of the proteins that bind and probably mediate the attachment of the 5S RNA into the large ribosomal subunit, where it forms part of the central protuberance. The polypeptide is Large ribosomal subunit protein uL18 (Bradyrhizobium sp. (strain BTAi1 / ATCC BAA-1182)).